Here is an 89-residue protein sequence, read N- to C-terminus: Small ribosomal subunit protein uS15 (89 aa).

Positions 1 to 13 are enriched in basic and acidic residues; that stretch reads MTISKERKEEVIS. The disordered stretch occupies residues 1–24; sequence MTISKERKEEVISEHGAAAGDTGS.

Belongs to the universal ribosomal protein uS15 family. In terms of assembly, part of the 30S ribosomal subunit. Forms a bridge to the 50S subunit in the 70S ribosome, contacting the 23S rRNA.

One of the primary rRNA binding proteins, it binds directly to 16S rRNA where it helps nucleate assembly of the platform of the 30S subunit by binding and bridging several RNA helices of the 16S rRNA. Its function is as follows. Forms an intersubunit bridge (bridge B4) with the 23S rRNA of the 50S subunit in the ribosome. This is Small ribosomal subunit protein uS15 from Rhodopirellula baltica (strain DSM 10527 / NCIMB 13988 / SH1).